The primary structure comprises 371 residues: tRNA-specific 2-thiouridylase MnmA (371 aa).

ATP contacts are provided by residues 9 to 16 and Met-35; that span reads AMSGGVDS. The active-site Nucleophile is Cys-109. Cysteines 109 and 207 form a disulfide. Gly-133 contributes to the ATP binding site. An interaction with tRNA region spans residues 157–159; sequence KDQ. Cys-207 serves as the catalytic Cysteine persulfide intermediate.

This sequence belongs to the MnmA/TRMU family.

It is found in the cytoplasm. It carries out the reaction S-sulfanyl-L-cysteinyl-[protein] + uridine(34) in tRNA + AH2 + ATP = 2-thiouridine(34) in tRNA + L-cysteinyl-[protein] + A + AMP + diphosphate + H(+). Functionally, catalyzes the 2-thiolation of uridine at the wobble position (U34) of tRNA, leading to the formation of s(2)U34. This Solibacter usitatus (strain Ellin6076) protein is tRNA-specific 2-thiouridylase MnmA.